The primary structure comprises 203 residues: Ras-related protein Rab-8B (203 aa).

GTP-binding positions include 22 to 29 (GDSGVGKS), 70 to 74 (DTAGQ), and 128 to 131 (NKCD). S-geranylgeranyl cysteine attachment occurs at residues C202 and C203.

The protein belongs to the small GTPase superfamily. Rab family.

The protein resides in the cell membrane. Functionally, protein transport. Probably involved in vesicular traffic. This is Ras-related protein Rab-8B (rab8B) from Dictyostelium discoideum (Social amoeba).